Consider the following 137-residue polypeptide: Ribosomal RNA small subunit methyltransferase G (137 aa).

Residues Gly75, Phe80, and Ala126–Glu127 contribute to the S-adenosyl-L-methionine site.

Belongs to the methyltransferase superfamily. RNA methyltransferase RsmG family.

It is found in the cytoplasm. Specifically methylates the N7 position of a guanine in 16S rRNA. This chain is Ribosomal RNA small subunit methyltransferase G, found in Mycoplasma mycoides subsp. mycoides SC (strain CCUG 32753 / NCTC 10114 / PG1).